Here is a 433-residue protein sequence, read N- to C-terminus: Adenylosuccinate synthetase (433 aa).

GTP contacts are provided by residues 12 to 18 and 40 to 42; these read GDEGKGK and GHT. Catalysis depends on Asp13, which acts as the Proton acceptor. Asp13 and Gly40 together coordinate Mg(2+). Residues 13-16, 38-41, Thr130, Arg144, Gln225, Thr240, and Arg304 contribute to the IMP site; these read DEGK and NAGH. His41 (proton donor) is an active-site residue. Substrate is bound at residue 300–306; sequence ATTGRPR. Residues Arg306, 332–334, and 414–416 contribute to the GTP site; these read KLD and SIG.

It belongs to the adenylosuccinate synthetase family. Homodimer. Mg(2+) serves as cofactor.

Its subcellular location is the cytoplasm. It carries out the reaction IMP + L-aspartate + GTP = N(6)-(1,2-dicarboxyethyl)-AMP + GDP + phosphate + 2 H(+). It functions in the pathway purine metabolism; AMP biosynthesis via de novo pathway; AMP from IMP: step 1/2. Functionally, plays an important role in the de novo pathway of purine nucleotide biosynthesis. Catalyzes the first committed step in the biosynthesis of AMP from IMP. This Geobacter sulfurreducens (strain ATCC 51573 / DSM 12127 / PCA) protein is Adenylosuccinate synthetase.